A 320-amino-acid polypeptide reads, in one-letter code: Putative polysaccharide deacetylase (320 aa).

The 235-residue stretch at 69 to 303 (RSIESCFEYG…ITSKEGVWVA (235 aa)) folds into the NodB homology domain.

This sequence belongs to the polysaccharide deacetylase family. In terms of assembly, homodimer.

The protein resides in the prospore. In terms of biological role, may deacetylate chitin. Required for spore formation. This chain is Putative polysaccharide deacetylase, found in Schizosaccharomyces pombe (strain 972 / ATCC 24843) (Fission yeast).